The chain runs to 291 residues: Small ribosomal subunit biogenesis GTPase RsgA (291 aa).

The CP-type G domain occupies 63–221 (ENELKRPPVS…IADTPGFSAL (159 aa)). Residues 112-115 (TKKD) and 164-172 (GQSGVGKST) each bind GTP. Zn(2+) contacts are provided by cysteine 245, cysteine 250, histidine 252, and cysteine 258.

Belongs to the TRAFAC class YlqF/YawG GTPase family. RsgA subfamily. As to quaternary structure, monomer. Associates with 30S ribosomal subunit, binds 16S rRNA. Requires Zn(2+) as cofactor.

The protein resides in the cytoplasm. One of several proteins that assist in the late maturation steps of the functional core of the 30S ribosomal subunit. Helps release RbfA from mature subunits. May play a role in the assembly of ribosomal proteins into the subunit. Circularly permuted GTPase that catalyzes slow GTP hydrolysis, GTPase activity is stimulated by the 30S ribosomal subunit. In Staphylococcus aureus (strain COL), this protein is Small ribosomal subunit biogenesis GTPase RsgA.